A 183-amino-acid chain; its full sequence is Probable apo-citrate lyase phosphoribosyl-dephospho-CoA transferase (183 aa).

This sequence belongs to the CitX family.

The catalysed reaction is apo-[citrate lyase ACP] + 2'-(5''-triphospho-alpha-D-ribosyl)-3'-dephospho-CoA = holo-[citrate lyase ACP] + diphosphate. In terms of biological role, transfers 2-(5''-triphosphoribosyl)-3'-dephosphocoenzyme-A on a serine residue to the apo-acyl carrier protein (gamma chain) of the citrate lyase to yield holo-acyl carrier protein. The polypeptide is Probable apo-citrate lyase phosphoribosyl-dephospho-CoA transferase (Escherichia coli (strain 55989 / EAEC)).